The sequence spans 118 residues: Beta-elicitin cryptogein (118 aa).

An N-terminal signal peptide occupies residues M1 to A20. Intrachain disulfides connect C23-C91, C47-C76, and C71-C115.

The protein belongs to the elicitin family.

It is found in the secreted. Its function is as follows. Induces local and distal defense responses (incompatible hypersensitive reaction) in plants from the solanaceae and cruciferae families. Elicits leaf necrosis and causes the accumulation of pathogenesis-related proteins. Might interact with the lipidic molecules of the plasma membrane. The sequence is that of Beta-elicitin cryptogein from Phytophthora cryptogea.